The sequence spans 1401 residues: Lysine-specific demethylase 6A (1401 aa).

Residues 1–1095 (MKSCGVSLAT…TNIDLSDDKK (1095 aa)) are interaction with SUPT6H. TPR repeat units lie at residues 93–126 (SDFF…QSDY), 130–163 (AAFL…DPSF), 170–199 (HLRL…DCNP), 205–238 (AEIQ…ENLS), 250–283 (GWMH…DPNS), 284–317 (GQSW…SEAS), 318–351 (ADTW…DHGH), and 352–385 (AAAW…KSCS). A compositionally biased stretch (polar residues) spans 437-449 (AMNTAQQNTSDNW). The tract at residues 437–457 (AMNTAQQNTSDNWSGGHAVSH) is disordered. Omega-N-methylarginine is present on R519. The tract at residues 521–541 (TGIPNGPTADSSLPTNSVSGQ) is disordered. The residue at position 549 (R549) is an Omega-N-methylarginine. 2 stretches are compositionally biased toward polar residues: residues 624–652 (LTSS…SHSA) and 660–724 (LSST…SGNI). Disordered regions lie at residues 624–746 (LTSS…SVEG), 758–778 (AVCS…SDNP), 810–864 (KTDN…ESQS), 914–940 (LLDK…NPPT), and 1043–1079 (FQES…KGPF). At S769 the chain carries Phosphoserine. The segment covering 814-833 (SVASSPSSAISTATPSPKST) has biased composition (low complexity). Phosphothreonine is present on T827. The residue at position 829 (S829) is a Phosphoserine. Residues 834 to 848 (EQTTTNSVTSLNSPH) show a composition bias toward polar residues. Over residues 918–931 (CPPPRPPSSPYPPL) the composition is skewed to pro residues. Basic and acidic residues predominate over residues 1046–1063 (SLREENEKRSHHKDHSDS). A JmjC domain is found at 1095-1258 (KWKLQLHELT…YKLAVERYEW (164 aa)). Residues H1146, E1148, and H1226 each coordinate Fe cation. Positions 1331, 1334, 1358, and 1361 each coordinate Zn(2+).

This sequence belongs to the UTX family. As to quaternary structure, interacts with TLE1. Component of the MLL2/3 complex (also named ASCOM complex), at least composed of KMT2D/MLL2 or KMT2C/MLL3, ASH2L, RBBP5, WDR5, NCOA6, DPY30, KDM6A (or KDM6B), PAXIP1/PTIP, PAGR1 and alpha- and beta-tubulin. Interacts with SUPT6H. Interacts with SMARCA4. Interacts with PROSER1. L-ascorbate is required as a cofactor. Fe(2+) serves as cofactor.

Its subcellular location is the nucleus. The catalysed reaction is N(6),N(6),N(6)-trimethyl-L-lysyl(27)-[histone H3] + 2 2-oxoglutarate + 2 O2 = N(6)-methyl-L-lysyl(27)-[histone H3] + 2 formaldehyde + 2 succinate + 2 CO2. Functionally, histone demethylase that specifically demethylates 'Lys-27' of histone H3, thereby playing a central role in histone code. Demethylates trimethylated and dimethylated but not monomethylated H3 'Lys-27'. Plays a central role in regulation of posterior development, by regulating HOX gene expression. Demethylation of 'Lys-27' of histone H3 is concomitant with methylation of 'Lys-4' of histone H3, and regulates the recruitment of the PRC1 complex and monoubiquitination of histone H2A. Plays a demethylase-independent role in chromatin remodeling to regulate T-box family member-dependent gene expression. In Homo sapiens (Human), this protein is Lysine-specific demethylase 6A (KDM6A).